The following is a 304-amino-acid chain: Homoserine kinase (304 aa).

ATP is bound at residue 90-100 (PLARGLGSSAS).

Belongs to the GHMP kinase family. Homoserine kinase subfamily.

The protein localises to the cytoplasm. The enzyme catalyses L-homoserine + ATP = O-phospho-L-homoserine + ADP + H(+). The protein operates within amino-acid biosynthesis; L-threonine biosynthesis; L-threonine from L-aspartate: step 4/5. In terms of biological role, catalyzes the ATP-dependent phosphorylation of L-homoserine to L-homoserine phosphate. This Staphylococcus aureus (strain MRSA252) protein is Homoserine kinase.